A 130-amino-acid chain; its full sequence is Fluoride-specific ion channel FluC (130 aa).

A run of 4 helical transmembrane segments spans residues 10-30, 41-61, 72-89, and 105-125; these read FAVALGAIGGSLSRYYLSLWF, GTLIINLSGCVVMGWFMTVAM, LLFGVGFLGSYTTFSTYE, and LVYWLGSCLFGALAMELGILL. 2 residues coordinate Na(+): Gly80 and Thr83.

This sequence belongs to the fluoride channel Fluc/FEX (TC 1.A.43) family.

The protein resides in the cell inner membrane. It catalyses the reaction fluoride(in) = fluoride(out). Na(+) is not transported, but it plays an essential structural role and its presence is essential for fluoride channel function. In terms of biological role, fluoride-specific ion channel. Important for reducing fluoride concentration in the cell, thus reducing its toxicity. This chain is Fluoride-specific ion channel FluC, found in Synechococcus sp. (strain JA-2-3B'a(2-13)) (Cyanobacteria bacterium Yellowstone B-Prime).